Reading from the N-terminus, the 379-residue chain is Chaperone protein DnaJ (379 aa).

A J domain is found at 5 to 70 (DYYEVLGVGK…EKKAAYDQYG (66 aa)). The CR-type zinc finger occupies 139–217 (GHEAQIRVPH…CHGQGKLKSQ (79 aa)). Cysteine 152, cysteine 155, cysteine 169, cysteine 172, cysteine 191, cysteine 194, cysteine 205, and cysteine 208 together coordinate Zn(2+). CXXCXGXG motif repeat units follow at residues 152–159 (CDHCHGNG), 169–176 (CPTCHGAG), 191–198 (CPKCHGSG), and 205–212 (CTKCHGQG). The interval 356–379 (VHEGGSRHSPQEQSWLDKVKSFFS) is disordered.

This sequence belongs to the DnaJ family. In terms of assembly, homodimer. Zn(2+) is required as a cofactor.

It localises to the cytoplasm. Participates actively in the response to hyperosmotic and heat shock by preventing the aggregation of stress-denatured proteins and by disaggregating proteins, also in an autonomous, DnaK-independent fashion. Unfolded proteins bind initially to DnaJ; upon interaction with the DnaJ-bound protein, DnaK hydrolyzes its bound ATP, resulting in the formation of a stable complex. GrpE releases ADP from DnaK; ATP binding to DnaK triggers the release of the substrate protein, thus completing the reaction cycle. Several rounds of ATP-dependent interactions between DnaJ, DnaK and GrpE are required for fully efficient folding. Also involved, together with DnaK and GrpE, in the DNA replication of plasmids through activation of initiation proteins. In Cupriavidus pinatubonensis (strain JMP 134 / LMG 1197) (Cupriavidus necator (strain JMP 134)), this protein is Chaperone protein DnaJ.